Reading from the N-terminus, the 464-residue chain is Glycine receptor subunit alpha-3 (464 aa).

The signal sequence occupies residues 1–33 (MAHVRHFRTLVSGFYFWEAALLLSLVATKETDS). At 34–255 (ARSRSAPMSP…RFHLERQMGY (222 aa)) the chain is on the extracellular side. Residue Asn71 is glycosylated (N-linked (GlcNAc...) asparagine). Cys171 and Cys185 are oxidised to a cystine. Zn(2+) is bound by residues Glu225 and Asp227. Cys231 and Cys242 form a disulfide bridge. Residue 235-240 (YNTGKF) coordinates strychnine. His248 contributes to the Zn(2+) binding site. The chain crosses the membrane as a helical span at residues 256–277 (YLIQMYIPSLLIVILSWVSFWI). Residues 278–282 (NMDAA) lie on the Cytoplasmic side of the membrane. Residues 283–303 (PARVALGITTVLTMTTQSSGS) traverse the membrane as a helical segment. The Extracellular segment spans residues 304–314 (RASLPKVSYVK). A helical membrane pass occupies residues 315–335 (AIDIWMAVCLLFVFSALLEYA). Topologically, residues 336 to 430 (AVNFVSRQHK…FIDRAKKIDT (95 aa)) are cytoplasmic. 2 positions are modified to phosphoserine: Ser370 and Ser379. The chain crosses the membrane as a helical span at residues 431-451 (ISRACFPLAFLIFNIFYWVIY). At 452 to 464 (KILRHEDIHQQQD) the chain is on the extracellular side.

This sequence belongs to the ligand-gated ion channel (TC 1.A.9) family. Glycine receptor (TC 1.A.9.3) subfamily. GLRA3 sub-subfamily. As to quaternary structure, homopentamer (in vitro). Heteropentamer composed of GLRA3 and GLRB. Both homopentamers and heteropentamers form functional ion channels, but their characteristics are subtly different. In terms of processing, phosphorylated by PKA; this causes down-regulation of channel activity. Widely distributed throughout the central nervous system.

It is found in the postsynaptic cell membrane. The protein resides in the perikaryon. Its subcellular location is the cell projection. The protein localises to the dendrite. It localises to the synapse. It is found in the cell membrane. The enzyme catalyses chloride(in) = chloride(out). Functionally, glycine receptors are ligand-gated chloride channels. Channel opening is triggered by extracellular glycine. Channel characteristics depend on the subunit composition; heteropentameric channels display faster channel closure. Plays an important role in the down-regulation of neuronal excitability. Contributes to the generation of inhibitory postsynaptic currents. Contributes to increased pain perception in response to increased prostaglandin E2 levels. Plays a role in cellular responses to ethanol. The chain is Glycine receptor subunit alpha-3 (GLRA3) from Homo sapiens (Human).